Reading from the N-terminus, the 212-residue chain is Imidazole glycerol phosphate synthase subunit HisH (212 aa).

Residues 3-212 enclose the Glutamine amidotransferase type-1 domain; it reads TVAVIDYGMG…QNFAAWDGRW (210 aa). C81 serves as the catalytic Nucleophile. Catalysis depends on residues H190 and E192.

Heterodimer of HisH and HisF.

The protein localises to the cytoplasm. It carries out the reaction 5-[(5-phospho-1-deoxy-D-ribulos-1-ylimino)methylamino]-1-(5-phospho-beta-D-ribosyl)imidazole-4-carboxamide + L-glutamine = D-erythro-1-(imidazol-4-yl)glycerol 3-phosphate + 5-amino-1-(5-phospho-beta-D-ribosyl)imidazole-4-carboxamide + L-glutamate + H(+). The catalysed reaction is L-glutamine + H2O = L-glutamate + NH4(+). It functions in the pathway amino-acid biosynthesis; L-histidine biosynthesis; L-histidine from 5-phospho-alpha-D-ribose 1-diphosphate: step 5/9. Functionally, IGPS catalyzes the conversion of PRFAR and glutamine to IGP, AICAR and glutamate. The HisH subunit catalyzes the hydrolysis of glutamine to glutamate and ammonia as part of the synthesis of IGP and AICAR. The resulting ammonia molecule is channeled to the active site of HisF. The protein is Imidazole glycerol phosphate synthase subunit HisH of Pseudomonas syringae pv. syringae (strain B728a).